The chain runs to 171 residues: Peptide deformylase (171 aa).

The Fe cation site is built by Cys87 and His129. Residue Glu130 is part of the active site. A Fe cation-binding site is contributed by His133.

This sequence belongs to the polypeptide deformylase family. Requires Fe(2+) as cofactor.

It carries out the reaction N-terminal N-formyl-L-methionyl-[peptide] + H2O = N-terminal L-methionyl-[peptide] + formate. Removes the formyl group from the N-terminal Met of newly synthesized proteins. Requires at least a dipeptide for an efficient rate of reaction. N-terminal L-methionine is a prerequisite for activity but the enzyme has broad specificity at other positions. The chain is Peptide deformylase from Pseudothermotoga lettingae (strain ATCC BAA-301 / DSM 14385 / NBRC 107922 / TMO) (Thermotoga lettingae).